Here is a 185-residue protein sequence, read N- to C-terminus: MINEIKKDTQLRMEKSLETFKNHIAKVRTGRAQPSLLDGIQVEYYGSPTPLRQLANVVAEDARTLAVTVFDRSLISAVEKAILTSDLGLNPSSAGTTIRVPLPPLTEERRRDLIKIVKGEAEQGKIAVRNVRRDANDQIKALLKDKEISEDEERKAQDEIQKITDTFVKKVDEVLADKEKELLDF.

It belongs to the RRF family.

The protein localises to the cytoplasm. Responsible for the release of ribosomes from messenger RNA at the termination of protein biosynthesis. May increase the efficiency of translation by recycling ribosomes from one round of translation to another. This chain is Ribosome-recycling factor, found in Pasteurella multocida (strain Pm70).